The chain runs to 441 residues: Proline--tRNA ligase (441 aa).

Belongs to the class-II aminoacyl-tRNA synthetase family. ProS type 2 subfamily. As to quaternary structure, homodimer.

It is found in the cytoplasm. It carries out the reaction tRNA(Pro) + L-proline + ATP = L-prolyl-tRNA(Pro) + AMP + diphosphate. Catalyzes the attachment of proline to tRNA(Pro) in a two-step reaction: proline is first activated by ATP to form Pro-AMP and then transferred to the acceptor end of tRNA(Pro). The polypeptide is Proline--tRNA ligase (Bartonella tribocorum (strain CIP 105476 / IBS 506)).